Reading from the N-terminus, the 109-residue chain is CRISPR-associated endoribonuclease Cas2 (109 aa).

Asp8 provides a ligand contact to Mg(2+).

Belongs to the CRISPR-associated endoribonuclease Cas2 protein family. As to quaternary structure, homodimer, forms a heterotetramer with a Cas1 homodimer. Mg(2+) serves as cofactor.

Its function is as follows. CRISPR (clustered regularly interspaced short palindromic repeat), is an adaptive immune system that provides protection against mobile genetic elements (viruses, transposable elements and conjugative plasmids). CRISPR clusters contain sequences complementary to antecedent mobile elements and target invading nucleic acids. CRISPR clusters are transcribed and processed into CRISPR RNA (crRNA). Functions as a ssRNA-specific endoribonuclease. Involved in the integration of spacer DNA into the CRISPR cassette. This is CRISPR-associated endoribonuclease Cas2 from Streptococcus mutans serotype c (strain ATCC 700610 / UA159).